The sequence spans 282 residues: Serine/threonine-protein kinase Aurora-2 (282 aa).

The 252-residue stretch at 19–270 (FDIGKPLGRG…LHKLLEHPWI (252 aa)) folds into the Protein kinase domain. ATP contacts are provided by residues 25–33 (LGRGKFGHV) and Lys-48. The active-site Proton acceptor is Asp-142. Ser-164 carries the phosphoserine modification. At Thr-173 the chain carries Phosphothreonine.

The protein belongs to the protein kinase superfamily. Ser/Thr protein kinase family. Aurora subfamily. Post-translationally, phosphorylation at Thr-173 may regulate activity and degradation of AUR2 in a cell cycle dependent manner. In terms of tissue distribution, abundant in roots, flowers and flower buds, low or absent in expanded leaves, stems and siliques.

It is found in the nucleus membrane. It localises to the cytoplasm. The protein localises to the cytoskeleton. The protein resides in the spindle. Its subcellular location is the spindle pole. It catalyses the reaction L-seryl-[protein] + ATP = O-phospho-L-seryl-[protein] + ADP + H(+). It carries out the reaction L-threonyl-[protein] + ATP = O-phospho-L-threonyl-[protein] + ADP + H(+). Its function is as follows. Phosphorylates specifically 'Ser-10' of histone H3 in vitro. Associates with cytoskeletal structures that are necessary for cytokinesis and with the microtubule spindle. Might colocalize with gamma-tubulin and function in microtubule organizing centers (MTOCs). The sequence is that of Serine/threonine-protein kinase Aurora-2 (AUR2) from Arabidopsis thaliana (Mouse-ear cress).